The chain runs to 713 residues: Undecaprenyl-diphosphooligosaccharide--protein glycotransferase (713 aa).

The Cytoplasmic portion of the chain corresponds to 1-11 (MLKKEYLKNPY). A helical membrane pass occupies residues 12-35 (LVLFAMIILAYVFSVLCRFYWIWW). The Periplasmic portion of the chain corresponds to 36-96 (ASEFNEYFFN…YWLYKITPFS (61 aa)). The DXD motif 1 signature appears at 52–54 (SND). D54 lines the Mn(2+) pocket. The helical transmembrane segment at 97–122 (FESIILYMSTFLSSLVVIPIILLANE) threads the bilayer. Topologically, residues 123–125 (YKR) are cytoplasmic. A helical transmembrane segment spans residues 126-144 (PLMGFVAALLASVANSYYN). The Periplasmic portion of the chain corresponds to 145–152 (RTMSGYYD). D152 provides a ligand contact to Mn(2+). The short motif at 152–154 (DTD) is the DXD motif 2 element. Residues 153-174 (TDMLVIVLPMFILFFMVRMILK) traverse the membrane as a helical segment. Over 175 to 176 (KD) the chain is Cytoplasmic. The helical transmembrane segment at 177–192 (FFSLIALPLFIGIYLW) threads the bilayer. The Periplasmic portion of the chain corresponds to 193 to 197 (WYPSS). 194-196 (YPS) contacts [alpha-D-GalNAc-(1-&gt;4)]2-[beta-D-Glc-(1-&gt;3)]-[alpha-D-GalNAc-(1-&gt;4)]2-alpha-D-GalNAc-(1-&gt;3)-alpha-D-diNAcBac-tri-trans,hepta-cis-undecaprenyl diphosphate. A helical transmembrane segment spans residues 198–215 (YTLNVALIGLFLIYTLIF). Residues 216 to 220 (HRKEK) lie on the Cytoplasmic side of the membrane. Residues 221 to 233 (IFYIAVILSSLTL) form a helical membrane-spanning segment. Over 234-237 (SNIA) the chain is Periplasmic. Residues 238 to 254 (WFYQSAIIVILFALFAL) traverse the membrane as a helical segment. Residues 255-260 (EQKRLN) lie on the Cytoplasmic side of the membrane. The chain crosses the membrane as a helical span at residues 261 to 278 (FMIIGILGSATLIFLILS). Residues 279 to 324 (GGVDPILYQLKFYIFRNDESANLTQGFMYFNVNQTIQEVENVDFSE) lie on the Periplasmic side of the membrane. Y291 lines the [alpha-D-GalNAc-(1-&gt;4)]2-[beta-D-Glc-(1-&gt;3)]-[alpha-D-GalNAc-(1-&gt;4)]2-alpha-D-GalNAc-(1-&gt;3)-alpha-D-diNAcBac-tri-trans,hepta-cis-undecaprenyl diphosphate pocket. The short motif at 313–316 (TIQE) is the TIXE motif element. E316 contributes to the Mn(2+) binding site. A helical membrane pass occupies residues 325 to 347 (FMRRISGSEIVFLFSLFGFVWLL). The Cytoplasmic segment spans residues 348–352 (RKHKS). The helical transmembrane segment at 353 to 369 (MIMALPILVLGFLALKG) threads the bilayer. Topologically, residues 370 to 373 (GLRF) are periplasmic. R372 contacts [alpha-D-GalNAc-(1-&gt;4)]2-[beta-D-Glc-(1-&gt;3)]-[alpha-D-GalNAc-(1-&gt;4)]2-alpha-D-GalNAc-(1-&gt;3)-alpha-D-diNAcBac-tri-trans,hepta-cis-undecaprenyl diphosphate. Residues 374–396 (TIYSVPVMALGFGFLLSEFKAIL) traverse the membrane as a helical segment. Over 397-406 (VKKYSQLTSN) the chain is Cytoplasmic. Residues 407–427 (VCIVFATILTLAPVFIHIYNY) form a helical membrane-spanning segment. The Periplasmic segment spans residues 428–713 (KAPTVFSQNE…RDAKVFKLKI (286 aa)). Residues 457 to 459 (WWD) are interacts with target acceptor peptide in protein substrate. Residues 457–461 (WWDYG) carry the WWDYG motif motif. Position 462 (Y462) interacts with [alpha-D-GalNAc-(1-&gt;4)]2-[beta-D-Glc-(1-&gt;3)]-[alpha-D-GalNAc-(1-&gt;4)]2-alpha-D-GalNAc-(1-&gt;3)-alpha-D-diNAcBac-tri-trans,hepta-cis-undecaprenyl diphosphate. The N-linked (DATDGlc) asparagine glycan is linked to N534. The MI motif signature appears at 568-575 (MSLIFSTV).

The protein belongs to the STT3 family. Mg(2+) is required as a cofactor. Mn(2+) serves as cofactor.

It localises to the cell inner membrane. The catalysed reaction is tritrans,heptacis-undecaprenyl diphosphooligosaccharide + [protein]-L-asparagine = tritrans,heptacis-undecaprenyl diphosphate + a glycoprotein with the oligosaccharide chain attached by N-beta-D-glycosyl linkage to protein L-asparagine.. It functions in the pathway protein modification; protein glycosylation. Oligosaccharyltransferase that catalyzes the transfer of a preassembled heptasaccharide from a lipid donor to an asparagine residue in nascent polypeptide chains, affording a beta-linked glycan to the asparagine side chain of target proteins. Functionally, oligosaccharyl transferase (OST) that catalyzes the initial transfer of a defined glycan (GalNAc(2)GlcGalNAc(3)Bac(NAc)(2) in eubacteria, where Bac(NAc)(2) is di-N-acetyl bacillosamine) from the lipid carrier undecaprenol-pyrophosphate to an asparagine residue within an Asp/Glu-Asn-X-Ser/Thr consensus motif in nascent polypeptide chains, the first step in protein N-glycosylation. The protein is Undecaprenyl-diphosphooligosaccharide--protein glycotransferase (pglB) of Campylobacter jejuni (strain RM1221).